Here is a 591-residue protein sequence, read N- to C-terminus: Aspartate--tRNA ligase (591 aa).

Residue Glu-175 coordinates L-aspartate. Residues 199-202 (QLFK) are aspartate. Arg-221 provides a ligand contact to L-aspartate. Residues 221-223 (RDE) and Gln-230 contribute to the ATP site. An L-aspartate-binding site is contributed by His-449. Position 483 (Glu-483) interacts with ATP. Residue Arg-490 coordinates L-aspartate. 535–538 (GLDR) provides a ligand contact to ATP.

It belongs to the class-II aminoacyl-tRNA synthetase family. Type 1 subfamily. As to quaternary structure, homodimer.

It localises to the cytoplasm. It carries out the reaction tRNA(Asp) + L-aspartate + ATP = L-aspartyl-tRNA(Asp) + AMP + diphosphate. Catalyzes the attachment of L-aspartate to tRNA(Asp) in a two-step reaction: L-aspartate is first activated by ATP to form Asp-AMP and then transferred to the acceptor end of tRNA(Asp). This chain is Aspartate--tRNA ligase, found in Oceanobacillus iheyensis (strain DSM 14371 / CIP 107618 / JCM 11309 / KCTC 3954 / HTE831).